The primary structure comprises 346 residues: Phosphoribosylformylglycinamidine cyclo-ligase (346 aa).

This sequence belongs to the AIR synthase family.

The protein resides in the cytoplasm. The catalysed reaction is 2-formamido-N(1)-(5-O-phospho-beta-D-ribosyl)acetamidine + ATP = 5-amino-1-(5-phospho-beta-D-ribosyl)imidazole + ADP + phosphate + H(+). It functions in the pathway purine metabolism; IMP biosynthesis via de novo pathway; 5-amino-1-(5-phospho-D-ribosyl)imidazole from N(2)-formyl-N(1)-(5-phospho-D-ribosyl)glycinamide: step 2/2. This chain is Phosphoribosylformylglycinamidine cyclo-ligase, found in Bacillus cereus (strain G9842).